The sequence spans 65 residues: Lantibiotic lacticin 3147 A2 (65 aa).

Residues 1–36 (MKEKNMKKNDTIELQLGKYLEDDMIELAEGDESHGG) constitute a propeptide that is removed on maturation. Residue Thr37 is modified to 2-oxobutanoic acid. 2,3-didehydrobutyrine occurs at positions 38 and 41. Residues Ser45 and Ser48 each carry the 2,3-didehydroalanine (Ser) modification. The lanthionine (Ser-Cys) cross-link spans 52 to 56 (STNTC). Cross-links (beta-methyllanthionine (Thr-Cys)) lie at residues 58 to 61 (TTKC) and 62 to 65 (TRAC).

Post-translationally, maturation of lantibiotics involves the enzymatic conversion of Thr, and Ser into dehydrated AA and the formation of thioether bonds with cysteine. This is followed by membrane translocation and cleavage of the modified precursor. It is not established whether the 2,3-didehydrobutyrines are the E- or Z-isomers. In the NMR model they were assumed to be the Z-isomer.

The protein localises to the secreted. In terms of biological role, lanthionine-containing peptide antibiotic (lantibiotic) active on Gram-positive bacteria. The bactericidal activity of lantibiotics is based on depolarization of energized bacterial cytoplasmic membranes, initiated by the formation of aqueous transmembrane pores. When present individually lacticin 3147 A2 exhibits weak activity towards L.lactis strain AM2 and L.lactis strain HP, and no activity towards L.lactis strain IFPL359, but when combined with lacticin 3147 A1 it displays strong activity towards all three strains. The chain is Lantibiotic lacticin 3147 A2 from Lactococcus lactis subsp. lactis (Streptococcus lactis).